A 179-amino-acid polypeptide reads, in one-letter code: Large ribosomal subunit protein uL5 (179 aa).

Belongs to the universal ribosomal protein uL5 family. In terms of assembly, part of the 50S ribosomal subunit; part of the 5S rRNA/L5/L18/L25 subcomplex. Contacts the 5S rRNA and the P site tRNA. Forms a bridge to the 30S subunit in the 70S ribosome.

In terms of biological role, this is one of the proteins that bind and probably mediate the attachment of the 5S RNA into the large ribosomal subunit, where it forms part of the central protuberance. In the 70S ribosome it contacts protein S13 of the 30S subunit (bridge B1b), connecting the 2 subunits; this bridge is implicated in subunit movement. Contacts the P site tRNA; the 5S rRNA and some of its associated proteins might help stabilize positioning of ribosome-bound tRNAs. The sequence is that of Large ribosomal subunit protein uL5 from Delftia acidovorans (strain DSM 14801 / SPH-1).